Consider the following 673-residue polypeptide: Leucine zipper putative tumor suppressor 3 (673 aa).

Disordered regions lie at residues 1 to 157, 172 to 239, and 251 to 317; these read MAKL…CSEP, FHSM…QHLA, and IGTA…PPSP. Basic and acidic residues predominate over residues 79–92; it reads SRERPGRYPSEDKG. Over residues 173–186 the composition is skewed to polar residues; that stretch reads HSMQNLCPPQTNGT. Residues 215–235 are compositionally biased toward low complexity; sequence GLSDSGRNSLTSLPTYSSSYS. A compositionally biased stretch (gly residues) spans 258 to 269; the sequence is SGSGGSSGGGSG. Low complexity predominate over residues 274 to 294; it reads GTSDSGRASSKSGSSSSMGRP. The segment covering 295 to 307 has biased composition (gly residues); it reads GHLGSGEGGGGGL. Serine 316 and serine 318 each carry phosphoserine. 2 coiled-coil regions span residues 317–496 and 571–639; these read PSAL…SLRD and RALR…RLRE. Positions 635 to 673 are disordered; sequence RRLRERGAAGGASTPTPQHGEEKKAWTPSRLERIESTEI. Positions 653-673 are enriched in basic and acidic residues; it reads HGEEKKAWTPSRLERIESTEI.

The protein belongs to the LZTS3 family. Interacts (via C-terminus) with SHANK3 (via PDZ domain). Interacts (via coiled coil) with SIPA1L1. Can form homooligomers.

The protein localises to the synapse. Its subcellular location is the postsynaptic density. It is found in the cell projection. It localises to the dendritic spine. The protein resides in the dendrite. The protein localises to the cytoplasm. Its subcellular location is the cytoskeleton. Functionally, may be involved in promoting the maturation of dendritic spines, probably via regulating SIPA1L1 levels at the postsynaptic density of synapses. This Homo sapiens (Human) protein is Leucine zipper putative tumor suppressor 3.